A 250-amino-acid chain; its full sequence is 5-oxoprolinase subunit A (250 aa).

Belongs to the LamB/PxpA family. Forms a complex composed of PxpA, PxpB and PxpC.

It carries out the reaction 5-oxo-L-proline + ATP + 2 H2O = L-glutamate + ADP + phosphate + H(+). Functionally, catalyzes the cleavage of 5-oxoproline to form L-glutamate coupled to the hydrolysis of ATP to ADP and inorganic phosphate. The chain is 5-oxoprolinase subunit A from Pseudomonas fluorescens (strain ATCC BAA-477 / NRRL B-23932 / Pf-5).